We begin with the raw amino-acid sequence, 305 residues long: Elongation factor Ts, mitochondrial (305 aa).

It belongs to the EF-Ts family.

It is found in the mitochondrion. Its function is as follows. Associates with the EF-Tu.GDP complex and induces the exchange of GDP to GTP. It remains bound to the aminoacyl-tRNA.EF-Tu.GTP complex up to the GTP hydrolysis stage on the ribosome. The protein is Elongation factor Ts, mitochondrial (tsfm) of Danio rerio (Zebrafish).